Consider the following 506-residue polypeptide: Secreted RxLR effector protein 134 (506 aa).

The signal sequence occupies residues 1-19; it reads MQGAYCVAVALLIAASGQA. The RxLR-dEER motif lies at 50–71; the sequence is RVLQVSHYPKDDLMLLAGNEER.

This sequence belongs to the RxLR effector family.

The protein localises to the secreted. It localises to the host nucleus. Its function is as follows. Secreted effector that completely suppresses the host cell death induced by cell death-inducing proteins. The sequence is that of Secreted RxLR effector protein 134 from Plasmopara viticola (Downy mildew of grapevine).